We begin with the raw amino-acid sequence, 216 residues long: Putative germin-like protein 2-1 (216 aa).

A signal peptide spans 1 to 21 (MASTWFFLLALLAVSISNAFA). Cys-31 and Cys-46 are disulfide-bonded. Residues 60-210 (SGLHMAGNTS…AFQVEKKIVD (151 aa)) enclose the Cupin type-1 domain. An N-linked (GlcNAc...) asparagine glycan is attached at Asn-67. The Mn(2+) site is built by His-108, His-110, Glu-115, and His-156.

The protein belongs to the germin family. As to quaternary structure, oligomer (believed to be a pentamer but probably hexamer).

The protein localises to the secreted. The protein resides in the extracellular space. Its subcellular location is the apoplast. May play a role in plant defense. Probably has no oxalate oxidase activity even if the active site is conserved. This chain is Putative germin-like protein 2-1, found in Oryza sativa subsp. japonica (Rice).